We begin with the raw amino-acid sequence, 85 residues long: U1-ctenitoxin-Pn1a (85 aa).

The N-terminal stretch at 1–16 (MKVAIVFLSLLVLAFA) is a signal peptide. The propeptide occupies 17–34 (SESIEENREEFPVEESAR). 5 disulfides stabilise this stretch: cysteine 35–cysteine 49, cysteine 42–cysteine 55, cysteine 46–cysteine 81, cysteine 48–cysteine 65, and cysteine 57–cysteine 63. A propeptide spanning residues 82–85 (QNKI) is cleaved from the precursor.

The protein belongs to the neurotoxin 03 (Tx2) family. 05 subfamily. Expressed by the venom gland.

The protein resides in the secreted. Insecticidal neurotoxin that reversibly inhibits the N-methyl-D-aspartate (NMDA)-subtype of ionotropic glutamate receptor (GRIN) and inhibits inactivation of insect sodium channels (Nav). In vivo, is highly toxic to insects. This Phoneutria nigriventer (Brazilian armed spider) protein is U1-ctenitoxin-Pn1a.